The chain runs to 376 residues: Queuine tRNA-ribosyltransferase (376 aa).

Asp89 acts as the Proton acceptor in catalysis. Substrate-binding positions include 89 to 93, Asp143, Gln194, and Gly221; that span reads DSGGF. Residues 252-258 form an RNA binding region; that stretch reads GVGTPSN. Catalysis depends on Asp271, which acts as the Nucleophile. The interval 276 to 280 is RNA binding; important for wobble base 34 recognition; the sequence is ARNGR. Zn(2+)-binding residues include Cys309, Cys311, Cys314, and His340.

This sequence belongs to the queuine tRNA-ribosyltransferase family. Homodimer. Within each dimer, one monomer is responsible for RNA recognition and catalysis, while the other monomer binds to the replacement base PreQ1. Zn(2+) is required as a cofactor.

It carries out the reaction 7-aminomethyl-7-carbaguanine + guanosine(34) in tRNA = 7-aminomethyl-7-carbaguanosine(34) in tRNA + guanine. The protein operates within tRNA modification; tRNA-queuosine biosynthesis. Its function is as follows. Catalyzes the base-exchange of a guanine (G) residue with the queuine precursor 7-aminomethyl-7-deazaguanine (PreQ1) at position 34 (anticodon wobble position) in tRNAs with GU(N) anticodons (tRNA-Asp, -Asn, -His and -Tyr). Catalysis occurs through a double-displacement mechanism. The nucleophile active site attacks the C1' of nucleotide 34 to detach the guanine base from the RNA, forming a covalent enzyme-RNA intermediate. The proton acceptor active site deprotonates the incoming PreQ1, allowing a nucleophilic attack on the C1' of the ribose to form the product. After dissociation, two additional enzymatic reactions on the tRNA convert PreQ1 to queuine (Q), resulting in the hypermodified nucleoside queuosine (7-(((4,5-cis-dihydroxy-2-cyclopenten-1-yl)amino)methyl)-7-deazaguanosine). This Clostridium acetobutylicum (strain ATCC 824 / DSM 792 / JCM 1419 / IAM 19013 / LMG 5710 / NBRC 13948 / NRRL B-527 / VKM B-1787 / 2291 / W) protein is Queuine tRNA-ribosyltransferase.